Reading from the N-terminus, the 815-residue chain is Tubulin polyglutamylase TTLL13 (815 aa).

Residues Arg-85–Glu-430 enclose the TTL domain. ATP is bound by residues Lys-202, Gln-208–Gly-209, Gln-230–Ile-233, and Lys-243–Asp-245. Position 208 (Gln-208) interacts with a protein. Arg-269 provides a ligand contact to L-glutamate. ATP is bound at residue Thr-291–Asn-292. Residues Tyr-293 and Lys-311 each contribute to the L-glutamate site. 3 residues coordinate Mg(2+): Asp-376, Glu-389, and Asn-391. The interval Cys-401 to Gly-482 is c-MTBD region. Lys-407 is an L-glutamate binding site. The stretch at Ala-504 to Thr-528 forms a coiled coil. Residues Arg-520–Gln-556 form a disordered region. The segment covering Ala-536–Arg-550 has biased composition (basic and acidic residues).

It belongs to the tubulin--tyrosine ligase family. Requires Mg(2+) as cofactor.

It carries out the reaction (L-glutamyl)(n)-gamma-L-glutamyl-L-glutamyl-[protein] + L-glutamate + ATP = (L-glutamyl)(n+1)-gamma-L-glutamyl-L-glutamyl-[protein] + ADP + phosphate + H(+). Polyglutamylase which modifies tubulin, generating polyglutamate side chains of variable lengths on the gamma-carboxyl group of specific glutamate residues within the C-terminal tail of tubulin. Mediates ATP-dependent polyglutamate side-chain elongation of the polyglutamylation reaction but not the initiation step. Preferentially modifies the alpha-tubulin tail over a beta-tail. The polypeptide is Tubulin polyglutamylase TTLL13 (Homo sapiens (Human)).